A 339-amino-acid polypeptide reads, in one-letter code: Undifferentiated embryonic cell transcription factor 1 (339 aa).

Disordered stretches follow at residues 1–62 and 144–270; these read MLLR…QRTP and MGLL…QVAP. Ser15, Ser18, Ser48, and Ser54 each carry phosphoserine. The span at 154-170 shows a compositional bias: basic residues; the sequence is RVRRRSTGPGRPQRRGR. Low complexity-rich tracts occupy residues 171–193 and 218–229; these read SSLS…PLAA and TSSPPLTSTDTL. Polar residues predominate over residues 261-270; that stretch reads GRASSPQVAP. The segment at 279–310 is leucine-zipper; that stretch reads QTLTHLGDISTVLGPLRDQLSTLNQHVEHLRG.

As to quaternary structure, binds to the N-terminal region of ATF2. Associates with the TFIID complex through interaction with TBP. In terms of processing, phosphorylated. In terms of tissue distribution, expressed mainly in pluripotent cells with expression rapidly down-regulated upon cell differentiation.

The protein resides in the nucleus. Its function is as follows. Acts as a transcriptional coactivator of ATF2. The polypeptide is Undifferentiated embryonic cell transcription factor 1 (Mus musculus (Mouse)).